A 1214-amino-acid chain; its full sequence is NBPF family member NBPF1 (1214 aa).

Positions 70–128 (MLRNERQFKEEKLAEQLKQAEELRQYKVLVHSQERELTQLREKLREGRDASRSLNQHLQ) form a coiled coil. The disordered stretch occupies residues 162–200 (LSPENDEDEDEDVQVEEAEKVLESSAPREVQKAEESKVP). Residues 165-177 (ENDEDEDEDVQVE) are compositionally biased toward acidic residues. One can recognise an Olduvai 1 domain in the interval 165–259 (ENDEDEDEDV…ECQDAVNILP (95 aa)). Over residues 190–200 (EVQKAEESKVP) the composition is skewed to basic and acidic residues. Positions 292–399 (NEKLHPQLAE…ASRSLNQHLQ (108 aa)) form a coiled coil. Positions 433–471 (LSPENDEDEDEDVQVEEAEKVLESSAPREVQKAEESKVP) are disordered. A compositionally biased stretch (acidic residues) spans 436 to 448 (ENDEDEDEDVQVE). Residues 436–530 (ENDEDEDEDV…ECQDAVNILP (95 aa)) form the Olduvai 2 domain. Positions 461–471 (EVQKAEESKVP) are enriched in basic and acidic residues. The stretch at 610 to 670 (KSMLRNERQF…ASCSLNQHLQ (61 aa)) forms a coiled coil. 6 consecutive Olduvai domains span residues 707 to 799 (ENDN…HIIP), 800 to 888 (ENES…ATGP), 891 to 946 (SREL…LDMD), 947 to 1038 (EIEK…PPCP), 1041 to 1114 (SREL…RSTK), and 1116 to 1214 (RRRR…IFPQ). Disordered regions lie at residues 722–746 (EKVQ…EDSL) and 791–837 (WEDA…EGYS). Composition is skewed to acidic residues over residues 801–810 (NESDDEEEEE) and 821–833 (ESEE…ESWD). The segment covering 1102–1121 (GKGKKRRGRRSTKKRRRRGR) has biased composition (basic residues). The interval 1102-1136 (GKGKKRRGRRSTKKRRRRGRKEGEEDQNPPCPRLS) is disordered.

The protein belongs to the NBPF family. In terms of tissue distribution, widely expressed. The only tissue which shows a weak expression is kidney.

It is found in the cytoplasm. The chain is NBPF family member NBPF1 from Homo sapiens (Human).